A 478-amino-acid chain; its full sequence is MKMSIRIPPRLLELAGRSLLRDQALAVSTLEELPTELFPPLFMEAFSRRRCEALKLMVQAWPFRRLPLRPLIKMPCLEAFQAVLDGLDALLTQGVRPRRWKLQVLDLQDVCENFWMVWSEAMAHGCFLNAKRNKKPVQDCPRMRGRQPLTVFVELWLKNRTLDEYLTCLLLWVKQRRDLLHLCCKKLKILGMPFRNIRSILKMVNLDCIQEVEVNCKWILPILTQFTPYLGHLRNLQKLVLSHMDVSRYVSPEQKKEIVTQFTTQFLKLRCLQKLYMNSVSFLEGHLDQLLSCLKTSLKVLTITNCVLLESDLKHLSQCPSISQLKTLDLSGIRLTNYSLVPLQILLEKVAATLEYLDLDDCGIIDSQVNAILPALSRCFELNTFSFCGNPICMATLENLLSHTIILKNLCLELYPAPQESYGADGTLCWSRFAQIRAELMKKVRHLRHPKRILFCTDNCPDHGDRSFYDLEADQYCC.

An LRR 1; degenerate repeat occupies 99–126; it reads RWKLQVLDLQDVCENFWMVWSEAMAHGC. Residues 181 to 205 form an LRR 2; degenerate repeat; sequence HLCCKKLKILGMPFRNIRSILKMVN. The stretch at 206 to 232 is one LRR 3; degenerate repeat; the sequence is LDCIQEVEVNCKWILPILTQFTPYLGH. An LRR 4; degenerate repeat occupies 233 to 268; the sequence is LRNLQKLVLSHMDVSRYVSPEQKKEIVTQFTTQFLK. LRR repeat units lie at residues 269–294, 295–326, 327–347, 351–378, and 379–403; these read LRCLQKLYMNSVSFLEGHLDQLLSCL, KTSLKVLTITNCVLLESDLKHLSQCPSISQLK, TLDLSGIRLTNYSLVPLQILL, AATLEYLDLDDCGIIDSQVNAILPALSR, and CFELNTFSFCGNPICMATLENLLSH.

This sequence belongs to the PRAME family.

The chain is PRAME family member 11 from Homo sapiens (Human).